The chain runs to 340 residues: Probable HTH-type transcriptional regulator EndR (340 aa).

The HTH lacI-type domain maps to 1 to 58 (MVTTMKEVAERAGVSKSTVSQFLQKRYNYMSENTKKKIEQAIEDLSYIPNEVARSLKQ). Positions 5–24 (MKEVAERAGVSKSTVSQFLQ) form a DNA-binding region, H-T-H motif.

Functionally, putative repressor of the endoglucanase operon. The polypeptide is Probable HTH-type transcriptional regulator EndR (endR) (Paenibacillus polymyxa (Bacillus polymyxa)).